A 348-amino-acid chain; its full sequence is NAC domain-containing protein 101 (348 aa).

Residues isoleucine 7–lysine 156 enclose the NAC domain. The DNA-binding element occupies valine 107–asparagine 162. Positions methionine 325–threonine 348 are disordered. Over residues serine 327–serine 341 the composition is skewed to low complexity.

The protein belongs to the plant vascular related NAC-domain protein family. In terms of assembly, homodimer. As to expression, expressed in root inner metaxylem vessels and in hypocotyl vessels. Present in root developing xylems. Accumulates in the xylem but not in interfascicular fibers or pith cells in inflorescence stems. Absent from secondary xylem in roots.

It localises to the nucleus. Functionally, transcription activator that binds to the secondary wall NAC binding element (SNBE), 5'-(T/A)NN(C/T)(T/C/G)TNNNNNNNA(A/C)GN(A/C/T)(A/T)-3', and to the tracheary elements (TE) specific regulating cis-element (TERE), 5'-CTTNAAAGCNA-3', in the promoter of target genes (e.g. genes involved in secondary wall biosynthesis, cell wall modification such as xylan accumulation, and programmed cell death). Involved in xylem formation in roots and shoots, especially regulating metaxylem vessel differentiation by promoting immature xylem vessel-specific genes expression, especially genes regulating programmed cell death (PCD) and secondary wall formation in tracheary elements (TE). Can activate MYB25, MYB46, MYB58, MYB63, MYB83, MYB103, CESA4, LBD15, LBD30, ERF115, XCP1, XCP2, NAC010/SND3, KNAT7, ASL19 and ASL20 expression. In Arabidopsis thaliana (Mouse-ear cress), this protein is NAC domain-containing protein 101.